A 302-amino-acid chain; its full sequence is Small ribosomal subunit protein uS2 (302 aa).

The tract at residues 275–302 is disordered; the sequence is EGEGESEAEPVVAKKKPVRAKRPAVKAE. The span at 287-302 shows a compositional bias: basic residues; sequence AKKKPVRAKRPAVKAE.

The protein belongs to the universal ribosomal protein uS2 family.

The sequence is that of Small ribosomal subunit protein uS2 from Opitutus terrae (strain DSM 11246 / JCM 15787 / PB90-1).